The primary structure comprises 255 residues: Segregation and condensation protein A (255 aa).

The protein belongs to the ScpA family. As to quaternary structure, component of a cohesin-like complex composed of ScpA, ScpB and the Smc homodimer, in which ScpA and ScpB bind to the head domain of Smc. The presence of the three proteins is required for the association of the complex with DNA.

The protein localises to the cytoplasm. Its function is as follows. Participates in chromosomal partition during cell division. May act via the formation of a condensin-like complex containing Smc and ScpB that pull DNA away from mid-cell into both cell halves. This Lactiplantibacillus plantarum (strain ATCC BAA-793 / NCIMB 8826 / WCFS1) (Lactobacillus plantarum) protein is Segregation and condensation protein A.